The following is a 122-amino-acid chain: MNTMIGFIVLLVSATVLGDPELDALRKELDERFDMEFKDGPMSEIQEKLFLQELEALDSELLEDDPQTDTYENSNFREKRCSGSDTPCYKGSKMCCRGLECTEPALYGIWYKSYFCKRPKKG.

A signal peptide spans 1 to 18; the sequence is MNTMIGFIVLLVSATVLG. A propeptide spanning residues 19 to 80 is cleaved from the precursor; the sequence is DPELDALRKE…YENSNFREKR (62 aa). 3 disulfide bridges follow: Cys-81/Cys-96, Cys-88/Cys-101, and Cys-95/Cys-116.

As to expression, expressed by the venom gland.

Its subcellular location is the secreted. In terms of biological role, probable ion channel inhibitor. In Hadronyche infensa (Fraser island funnel-web spider), this protein is U19-hexatoxin-Hi1a.